A 784-amino-acid chain; its full sequence is Lon protease (784 aa).

In terms of domain architecture, Lon N-terminal spans 11–204 (IPVLPLRDVV…YLMAMMESEI (194 aa)). 356 to 363 (GPPGVGKT) contacts ATP. Positions 592 to 773 (ENRVGQVTGL…EEVLALALQN (182 aa)) constitute a Lon proteolytic domain. Active-site residues include Ser679 and Lys722.

Belongs to the peptidase S16 family. In terms of assembly, homohexamer. Organized in a ring with a central cavity.

It is found in the cytoplasm. The catalysed reaction is Hydrolysis of proteins in presence of ATP.. In terms of biological role, ATP-dependent serine protease that mediates the selective degradation of mutant and abnormal proteins as well as certain short-lived regulatory proteins. Required for cellular homeostasis and for survival from DNA damage and developmental changes induced by stress. Degrades polypeptides processively to yield small peptide fragments that are 5 to 10 amino acids long. Binds to DNA in a double-stranded, site-specific manner. The polypeptide is Lon protease (Erwinia amylovora (Fire blight bacteria)).